Reading from the N-terminus, the 469-residue chain is 3-isopropylmalate dehydratase large subunit (469 aa).

The [4Fe-4S] cluster site is built by cysteine 347, cysteine 407, and cysteine 410.

The protein belongs to the aconitase/IPM isomerase family. LeuC type 1 subfamily. As to quaternary structure, heterodimer of LeuC and LeuD. It depends on [4Fe-4S] cluster as a cofactor.

It catalyses the reaction (2R,3S)-3-isopropylmalate = (2S)-2-isopropylmalate. It functions in the pathway amino-acid biosynthesis; L-leucine biosynthesis; L-leucine from 3-methyl-2-oxobutanoate: step 2/4. Functionally, catalyzes the isomerization between 2-isopropylmalate and 3-isopropylmalate, via the formation of 2-isopropylmaleate. In Prochlorococcus marinus subsp. pastoris (strain CCMP1986 / NIES-2087 / MED4), this protein is 3-isopropylmalate dehydratase large subunit.